We begin with the raw amino-acid sequence, 310 residues long: Homoserine kinase (310 aa).

91–101 (PIGSGLGSSAC) serves as a coordination point for ATP.

The protein belongs to the GHMP kinase family. Homoserine kinase subfamily.

The protein localises to the cytoplasm. It carries out the reaction L-homoserine + ATP = O-phospho-L-homoserine + ADP + H(+). It functions in the pathway amino-acid biosynthesis; L-threonine biosynthesis; L-threonine from L-aspartate: step 4/5. Its function is as follows. Catalyzes the ATP-dependent phosphorylation of L-homoserine to L-homoserine phosphate. This chain is Homoserine kinase, found in Escherichia coli O139:H28 (strain E24377A / ETEC).